Reading from the N-terminus, the 588-residue chain is Thioredoxin domain-containing protein 3 (588 aa).

One can recognise a Thioredoxin domain in the interval 2-119 (ASKKREVQLQ…VINLIDEERK (118 aa)). Residues cysteine 39 and cysteine 42 are joined by a disulfide bond. 3 NDK regions span residues 157-257 (IAII…DQPE), 315-455 (LEKT…STLG), and 456-588 (LIKP…PEEN). The segment at 230-261 (GSKHNPPSEETEPQTDTEPNERSEDQPEVEAQ) is disordered.

It in the C-terminal section; belongs to the NDK family. As to quaternary structure, monomer. As to expression, testis-specific. Expressed only in primary spermatocytes and round spermatids.

The protein localises to the cytoplasm. Its function is as follows. Probably required during the final stages of sperm tail maturation in the testis and/or epididymis, where extensive disulfide bonding of fibrous sheath (FS) proteins occurs. In vitro, it has neither nucleoside diphosphate kinase (NDPK) activity nor reducing activity on disulfide bonds. Exhibits a 3'-5' exonuclease activity with a preference for single-stranded DNA, suggesting roles in DNA proofreading and repair. In Homo sapiens (Human), this protein is Thioredoxin domain-containing protein 3.